Reading from the N-terminus, the 164-residue chain is UPF0251 protein MM_1448 (164 aa).

The span at 91–100 (GDYRMPRGDR) shows a compositional bias: basic and acidic residues. Positions 91-123 (GDYRMPRGDRTGPAGQGPAGGGRGRGQGKGRGG) are disordered. The segment covering 104-115 (AGQGPAGGGRGR) has biased composition (gly residues).

It belongs to the UPF0251 family.

This is UPF0251 protein MM_1448 from Methanosarcina mazei (strain ATCC BAA-159 / DSM 3647 / Goe1 / Go1 / JCM 11833 / OCM 88) (Methanosarcina frisia).